We begin with the raw amino-acid sequence, 150 residues long: MSVEPPPELEEKAASEPEAGAMPEKRAGAQAAGSTWLQGFGPPSVYHAAIVIFLEFFAWGLLTTPMLTVLHETFSQHTFLMNGLIQGVKGLLSFLSAPLIGALSDVWGRKPFLLGTVFFTCFPIPLMRISPCRVWWRAPVVPATCGRRMA.

A disordered region spans residues 1 to 25 (MSVEPPPELEEKAASEPEAGAMPEK). Residues 1–49 (MSVEPPPELEEKAASEPEAGAMPEKRAGAQAAGSTWLQGFGPPSVYHAA) are Extracellular-facing. A helical transmembrane segment spans residues 50 to 70 (IVIFLEFFAWGLLTTPMLTVL). The Cytoplasmic portion of the chain corresponds to 71 to 82 (HETFSQHTFLMN). A helical membrane pass occupies residues 83 to 103 (GLIQGVKGLLSFLSAPLIGAL). The Extracellular portion of the chain corresponds to 104–111 (SDVWGRKP). The chain crosses the membrane as a helical span at residues 112 to 132 (FLLGTVFFTCFPIPLMRISPC). Over 133-150 (RVWWRAPVVPATCGRRMA) the chain is Cytoplasmic.

The protein belongs to the major facilitator superfamily.

It is found in the membrane. This Homo sapiens (Human) protein is Major facilitator superfamily domain-containing 14C pseudogene.